The chain runs to 602 residues: Elongation factor 4 (602 aa).

Residues 7-196 (SKIRNFCIIA…HPQNEIKSPT (190 aa)) form the tr-type G domain. Residues 19 to 24 (DHGKST) and 136 to 139 (NKVD) contribute to the GTP site.

It belongs to the TRAFAC class translation factor GTPase superfamily. Classic translation factor GTPase family. LepA subfamily.

It is found in the cell inner membrane. It carries out the reaction GTP + H2O = GDP + phosphate + H(+). In terms of biological role, required for accurate and efficient protein synthesis under certain stress conditions. May act as a fidelity factor of the translation reaction, by catalyzing a one-codon backward translocation of tRNAs on improperly translocated ribosomes. Back-translocation proceeds from a post-translocation (POST) complex to a pre-translocation (PRE) complex, thus giving elongation factor G a second chance to translocate the tRNAs correctly. Binds to ribosomes in a GTP-dependent manner. The sequence is that of Elongation factor 4 from Prochlorococcus marinus (strain MIT 9515).